The primary structure comprises 572 residues: 2-succinyl-5-enolpyruvyl-6-hydroxy-3-cyclohexene-1-carboxylate synthase (572 aa).

The protein belongs to the TPP enzyme family. MenD subfamily. In terms of assembly, homodimer. Mg(2+) serves as cofactor. The cofactor is Mn(2+). Thiamine diphosphate is required as a cofactor.

The catalysed reaction is isochorismate + 2-oxoglutarate + H(+) = 5-enolpyruvoyl-6-hydroxy-2-succinyl-cyclohex-3-ene-1-carboxylate + CO2. Its pathway is quinol/quinone metabolism; 1,4-dihydroxy-2-naphthoate biosynthesis; 1,4-dihydroxy-2-naphthoate from chorismate: step 2/7. It participates in quinol/quinone metabolism; menaquinone biosynthesis. Its function is as follows. Catalyzes the thiamine diphosphate-dependent decarboxylation of 2-oxoglutarate and the subsequent addition of the resulting succinic semialdehyde-thiamine pyrophosphate anion to isochorismate to yield 2-succinyl-5-enolpyruvyl-6-hydroxy-3-cyclohexene-1-carboxylate (SEPHCHC). This chain is 2-succinyl-5-enolpyruvyl-6-hydroxy-3-cyclohexene-1-carboxylate synthase, found in Aeromonas salmonicida (strain A449).